The chain runs to 197 residues: Peptidyl-tRNA hydrolase (197 aa).

Position 23 (Tyr-23) interacts with tRNA. His-28 serves as the catalytic Proton acceptor. TRNA-binding residues include Phe-73, Asn-75, and Asn-121.

Belongs to the PTH family. In terms of assembly, monomer.

The protein resides in the cytoplasm. The enzyme catalyses an N-acyl-L-alpha-aminoacyl-tRNA + H2O = an N-acyl-L-amino acid + a tRNA + H(+). Its function is as follows. Hydrolyzes ribosome-free peptidyl-tRNAs (with 1 or more amino acids incorporated), which drop off the ribosome during protein synthesis, or as a result of ribosome stalling. In terms of biological role, catalyzes the release of premature peptidyl moieties from peptidyl-tRNA molecules trapped in stalled 50S ribosomal subunits, and thus maintains levels of free tRNAs and 50S ribosomes. This chain is Peptidyl-tRNA hydrolase, found in Frankia casuarinae (strain DSM 45818 / CECT 9043 / HFP020203 / CcI3).